The following is a 198-amino-acid chain: Carnitine operon protein CaiE (198 aa).

The tract at residues 179–198 (VEENRPRLKGTTDVKPKSAQ) is disordered. A compositionally biased stretch (basic and acidic residues) spans 180–198 (EENRPRLKGTTDVKPKSAQ).

It belongs to the transferase hexapeptide repeat family.

It participates in amine and polyamine metabolism; carnitine metabolism. Overproduction of CaiE stimulates the activity of CaiB and CaiD. In Salmonella agona (strain SL483), this protein is Carnitine operon protein CaiE.